The following is a 141-amino-acid chain: HTH-type transcriptional repressor NsrR (141 aa).

An HTH rrf2-type domain is found at 2-129; sequence QLTSFTDYGL…DNYTLADLVE (128 aa). Positions 28 to 51 form a DNA-binding region, H-T-H motif; the sequence is ISEVTDVYGVSRNHMVKIINQLSR. Positions 91, 96, and 102 each coordinate [2Fe-2S] cluster.

Requires [2Fe-2S] cluster as cofactor.

In terms of biological role, nitric oxide-sensitive repressor of genes involved in protecting the cell against nitrosative stress. May require iron for activity. The sequence is that of HTH-type transcriptional repressor NsrR from Escherichia coli O157:H7 (strain EC4115 / EHEC).